Consider the following 89-residue polypeptide: Large ribosomal subunit protein bL27 (89 aa).

The disordered stretch occupies residues 1–21 (MAHKKSGGSSRNGRDSNPKYL).

The protein belongs to the bacterial ribosomal protein bL27 family.

This is Large ribosomal subunit protein bL27 from Hyphomonas neptunium (strain ATCC 15444).